A 307-amino-acid chain; its full sequence is Ribosomal RNA small subunit methyltransferase H (307 aa).

S-adenosyl-L-methionine is bound by residues 38–40, D58, F82, D99, and Q106; that span reads GGH.

The protein belongs to the methyltransferase superfamily. RsmH family.

The protein resides in the cytoplasm. The catalysed reaction is cytidine(1402) in 16S rRNA + S-adenosyl-L-methionine = N(4)-methylcytidine(1402) in 16S rRNA + S-adenosyl-L-homocysteine + H(+). Functionally, specifically methylates the N4 position of cytidine in position 1402 (C1402) of 16S rRNA. The polypeptide is Ribosomal RNA small subunit methyltransferase H (Variovorax paradoxus (strain S110)).